The sequence spans 236 residues: uncharacterized protein (236 aa).

The N-terminal stretch at 1–22 (MEFKMQKIILGMLVVTASNAMA) is a signal peptide.

This is an uncharacterized protein from Pasteurella multocida (strain Pm70).